Here is a 1382-residue protein sequence, read N- to C-terminus: Suppressor of organelle fusion 2 (1382 aa).

One can recognise a BEACH domain in the interval 229–463 (RIPLDEATSN…QLFNRPHPIR (235 aa)). WD repeat units lie at residues 1094–1133 (GHQE…DEIG) and 1140–1176 (KHTR…LLAQ).

It belongs to the WD repeat WDR81 family. Interacts with sorf-1; the interaction is direct. Interacts with bec-1.

It is found in the early endosome. The protein resides in the late endosome. The protein localises to the cytoplasm. In terms of biological role, together with sorf-1 negatively regulates the levels of phosphatidylinositol 3-phosphate (PtdIns3P) to enable the conversion of early endosomes to late endosomes. Binds to sorf-1 and the sorf-1-sorf-2 complex likely acts through bec-1, a non-catalytic subunit of phosphatidylinositol 3-kinase (PI3K), to suppress PI3K activity, thereby negatively regulating endosomal PtdIns3P levels. This is Suppressor of organelle fusion 2 from Caenorhabditis elegans.